A 1658-amino-acid chain; its full sequence is Cortactin-binding protein 2 (1658 aa).

5 disordered regions span residues 1 to 24 (MATD…GATA), 203 to 235 (KTKT…SEFD), 348 to 437 (GAAL…LHPG), 451 to 475 (GNAN…SPTS), and 495 to 612 (RFTS…PPKP). Residues 119–276 (RKMQERMSTQ…EQLKRGNDSK (158 aa)) adopt a coiled-coil conformation. Basic and acidic residues predominate over residues 214–235 (SAEKRRSTEMEAQMEKQLSEFD). The span at 385 to 394 (GPSAGSASST) shows a compositional bias: low complexity. Polar residues predominate over residues 399–418 (NSTAPPTVQTPGIAPQSYSQ). Residue arginine 495 is modified to Asymmetric dimethylarginine. The span at 509-520 (AAPTGDGGTCPP) shows a compositional bias: low complexity. Residues 580 to 590 (TMASPPSSLPQ) show a composition bias toward polar residues. ANK repeat units follow at residues 706 to 736 (GRPT…DINY), 740 to 769 (DGHS…QVNA), 773 to 802 (NGFT…NINH), 806 to 835 (EGQT…DRSV), 839 to 868 (DGWT…PACR), and 909 to 939 (EGWT…EPER). The tract at residues 1448–1478 (ESGAWRKVSTSPRKKSGRFSPPSWNKPGLSE) is disordered. Serine 1521 is modified (phosphoserine). 2 disordered regions span residues 1538-1595 (RSES…NSQS) and 1611-1642 (PRSK…NTKE). Positions 1539–1558 (SESDISKIADSRDDLRRFDG) are enriched in basic and acidic residues. 2 stretches are compositionally biased toward polar residues: residues 1559-1569 (SRNNPAFSTVN) and 1581-1595 (PLSS…NSQS). Residues 1619–1633 (SQNTKRSSSSSNTRQ) show a composition bias toward low complexity.

In terms of assembly, interacts with CTTN/cortactin SH3 domain. Interacts with STRN, STRN4/zinedin and MOB4/phocein; this interactions mediate the association with the STRIPAK core complex and may regulate dendritic spine distribution of the STRIPAK complex in hippocampal neurons. Activation of glutamate receptors weakens the interaction with STRN and STRN4.

It localises to the cytoplasm. The protein localises to the cell cortex. Its subcellular location is the cell projection. The protein resides in the dendritic spine. Its function is as follows. Regulates the dendritic spine distribution of CTTN/cortactin in hippocampal neurons, and thus controls dendritic spinogenesis and dendritic spine maintenance. Associates with the striatin-interacting phosphatase and kinase (STRIPAK) core complex to regulate dendritic spine distribution of the STRIPAK complex in hippocampal neurons. The sequence is that of Cortactin-binding protein 2 (CTTNBP2) from Neofelis nebulosa (Clouded leopard).